Consider the following 384-residue polypeptide: MSKFPEKGLPREEVLNLLEDKTKVDLTFSSGKILGSMCTMPHELAIEVFARYIDRNLGDPGLHPGTRKIEEEVIEMLSDLLHLEKGYGHIVSGGTEANILAVRAFRNISDAERPELILPKSAHFSFIKAGEMLGVKLVWAELKQDYAVDVKDVEAKISDNTIGIVGIAGTTGLGVVDDIPALSDLAREYGIPLHVDAAFGGFVIPFAKSLGYDLPDFDFKLKGVESITIDPHKMGMAPIPAGGIIFRRKKYLKAISVLAPYLAGGKVWQATITGTRPGASVLAVWALIKHLGFEGYREIVRKAMELSRWFAEEIKKLNNAWLVREPMLNIVSFQTKNLRKVERELKRRGWGISAHRGYIRIVFMPHVTKEMVEEFLRDLREVLK.

N6-(pyridoxal phosphate)lysine is present on Lys233.

The protein belongs to the group II decarboxylase family. MfnA subfamily. Requires pyridoxal 5'-phosphate as cofactor.

It carries out the reaction L-aspartate + H(+) = beta-alanine + CO2. Its pathway is cofactor biosynthesis; coenzyme A biosynthesis. Its function is as follows. Catalyzes the decarboxylation of L-aspartate to produce beta-alanine. This Pyrococcus abyssi (strain GE5 / Orsay) protein is Probable L-aspartate decarboxylase.